Reading from the N-terminus, the 222-residue chain is MSHLVKMENGQSQTIQEMLGCIERYNPDHLKTLEAYVQDQAKNNTYDLEANLAVLKLYQFNPHMLNFDITYTILLKSLTSLPHTDFVMAKCLLLPQQMKDENVQTIIDLADILERADFTLFWQRAEVNRSMFRHIAGFHDSIRKFVSHVVGTTFQTIRKDLLKELLGGIEDSTLESWIKRNGWKHQGQGLVVVAMQDDKIKTKNITEKIEFDNVGGLMAQCL.

A PCI domain is found at 46 to 208 (YDLEANLAVL…KIKTKNITEK (163 aa)).

This sequence belongs to the eIF-3 subunit K family. In terms of assembly, component of the eukaryotic translation initiation factor 3 (eIF-3) complex. The eIF-3 complex interacts with pix.

The protein localises to the cytoplasm. Its function is as follows. Component of the eukaryotic translation initiation factor 3 (eIF-3) complex, which is involved in protein synthesis of a specialized repertoire of mRNAs and, together with other initiation factors, stimulates binding of mRNA and methionyl-tRNAi to the 40S ribosome. The eIF-3 complex specifically targets and initiates translation of a subset of mRNAs involved in cell proliferation. In Drosophila yakuba (Fruit fly), this protein is Eukaryotic translation initiation factor 3 subunit K.